Consider the following 177-residue polypeptide: Cell division inhibitor SulA (177 aa).

Positions 112–118 (ALASGNY) are ftsZ binding. The lon protease binding stretch occupies residues 170–177 (KIHSIHYH).

This sequence belongs to the SulA family. Interacts with FtsZ. In terms of processing, is rapidly cleaved and degraded by the Lon protease once DNA damage is repaired.

Component of the SOS system and an inhibitor of cell division. Accumulation of SulA causes rapid cessation of cell division and the appearance of long, non-septate filaments. In the presence of GTP, binds a polymerization-competent form of FtsZ in a 1:1 ratio, thus inhibiting FtsZ polymerization and therefore preventing it from participating in the assembly of the Z ring. This mechanism prevents the premature segregation of damaged DNA to daughter cells during cell division. The sequence is that of Cell division inhibitor SulA from Photorhabdus laumondii subsp. laumondii (strain DSM 15139 / CIP 105565 / TT01) (Photorhabdus luminescens subsp. laumondii).